The primary structure comprises 53 residues: Conotoxin Cal9.2e (53 aa).

The propeptide occupies 1–6 (KKGVTQ). Disulfide bonds link Cys-15–Cys-32, Cys-20–Cys-42, and Cys-22–Cys-47.

Expressed by the venom duct.

Its subcellular location is the secreted. Probable neurotoxin with unknown target. Possibly targets ion channels. The protein is Conotoxin Cal9.2e of Californiconus californicus (California cone).